The chain runs to 1261 residues: Apoptotic protease-activating factor 1 (1261 aa).

The region spanning 1-90 (MEERARSRLL…GDLASLLHSD (90 aa)) is the CARD domain. Positions 106–417 (VSPSVQAILS…LELEEVEDVL (312 aa)) constitute an NB-ARC domain. 154-161 (GMAGSGKS) lines the ATP pocket. 13 WD repeats span residues 615-654 (PHQGAVYYACFSKDGSKIASCGASKALRVFKSTSGEKLLE), 657-696 (AHEEDVLCCAFSPDDRHIATCASDRKVKLWNVERGVLIRE), 700-743 (EHEE…SQNT), 746-785 (GHMEPVNHCCFSPNDLYLATSSSDGSLKLFEVSSANEWKS), 798-836 (EIKAMVKCSTWSADGSQIICAARNTVFVFDVETSDLLLK), 840-879 (SRLSTIQFCHACPNSSLLAVALSHYTVELWNFESSKKKAE), 882-921 (GHLSWVHCVQFSPDGSLLLSSSDDQTIRLWETDRVHTSSA), 964-1003 (ELSSRIRCSCISRNAAFVALGSEDGTVQVIEVPSSKASVK), 1006-1045 (GHTKTVHHCQFTDDCEILITSSEDSTIRVWKWRTGECMVL), 1047-1088 (GHME…MLQD), 1091-1130 (CHEGAVLSCDVSSDGRLFATTSANRTAKVWSSASWKMLFL), 1133-1172 (GHKDCVRSCRFSWDNKRLATGDDNGEIRLWSMLDGALLKI), and 1184-1223 (YHAGWVTDLHFSPDNRVLVSTAGYIKWWSVESGEALQTFY).

Monomer. Oligomerizes upon binding of cytochrome c and dATP.

The protein resides in the cytoplasm. Oligomeric Apaf-1 mediates the cytochrome c-dependent autocatalytic activation of pro-caspase-9 (Apaf-3), leading to the activation of caspase-3 and apoptosis. This activation requires ATP. In Danio rerio (Zebrafish), this protein is Apoptotic protease-activating factor 1 (apaf1).